The following is a 441-amino-acid chain: Protein C-ets-1 (441 aa).

Residues lysine 8 and lysine 15 each carry the N6-acetyllysine; alternate modification. Glycyl lysine isopeptide (Lys-Gly) (interchain with G-Cter in SUMO2); alternate cross-links involve residues lysine 8 and lysine 15. Residue threonine 38 is modified to Phosphothreonine; by MAPK. A PNT domain is found at 51-136; that stretch reads ATFSGFTKEQ…EHLEILQKED (86 aa). The interval 130 to 243 is activation domain; required for transcription activation; the sequence is EILQKEDVKP…DNMCMGRTSR (114 aa). Lysine 138 is covalently cross-linked (Glycyl lysine isopeptide (Lys-Gly) (interchain with G-Cter in SUMO2)). Tyrosine 223 carries the phosphotyrosine modification. Lysine 227 participates in a covalent cross-link: Glycyl lysine isopeptide (Lys-Gly) (interchain with G-Cter in SUMO). Residues serine 251 and serine 254 each carry the phosphoserine modification. Residue threonine 265 is modified to Phosphothreonine. A phosphoserine mark is found at serine 267, serine 270, serine 282, and serine 285. The segment at 304-312 is helix HI-1; it reads FKDYVRDRA. Lysine 305 bears the N6-acetyllysine mark. The segment at 323-330 is helix HI-2; it reads AAALAGYT. Residues 335–415 constitute a DNA-binding region (ETS); the sequence is IQLWQFLLEL…AGKRYVYRFV (81 aa). The helix H4 stretch occupies residues 418 to 422; the sequence is LQSLL. Positions 426–432 are helix H5; it reads PEELHAM.

Belongs to the ETS family. Binds DNA as a homodimer; homodimerization is required for transcription activation. Interacts with MAF and MAFB. Interacts with PAX5; the interaction alters DNA-binding properties. Interacts with DAXX. Interacts with UBE2I. Interacts with SP100; the interaction is direct and modulates ETS1 transcriptional activity. Sumoylated on Lys-15 and Lys-227, preferentially with SUMO2; which inhibits transcriptional activity. In terms of processing, ubiquitinated; which induces proteasomal degradation. Post-translationally, phosphorylation at Ser-251, Ser-282 and Ser-285 by CaMK2/CaMKII in response to calcium signaling decreases affinity for DNA: an increasing number of phosphoserines causes DNA-binding to become progressively weaker. In terms of tissue distribution, highly expressed within lymphoid cells. Isoforms c-ETS-1A and Ets-1 p27 are both detected in all fetal tissues tested, but vary with tissue type in adult tissues. None is detected in brain or kidney.

It is found in the nucleus. It localises to the cytoplasm. Autoinhibited by a module composed of four alpha helices (HI-1, HI-2, H4, and H5) that flank the DNA-binding ETS domain, reducing the affinity for DNA. Phosphorylation by CaMK2/CaMKII in response to calcium signaling decreases affinity for DNA. In terms of biological role, transcription factor. Directly controls the expression of cytokine and chemokine genes in a wide variety of different cellular contexts. May control the differentiation, survival and proliferation of lymphoid cells. May also regulate angiogenesis through regulation of expression of genes controlling endothelial cell migration and invasion. Its function is as follows. Acts as a dominant-negative for isoform c-ETS-1A. The chain is Protein C-ets-1 (ETS1) from Homo sapiens (Human).